Here is a 154-residue protein sequence, read N- to C-terminus: Ribonuclease H (154 aa).

The RNase H type-1 domain maps to 1–142 (MTPKLVIYTD…ADELARLGML (142 aa)). Mg(2+)-binding residues include aspartate 10, glutamate 48, aspartate 70, and aspartate 134.

Belongs to the RNase H family. As to quaternary structure, monomer. Requires Mg(2+) as cofactor.

It localises to the cytoplasm. It catalyses the reaction Endonucleolytic cleavage to 5'-phosphomonoester.. Functionally, endonuclease that specifically degrades the RNA of RNA-DNA hybrids. The sequence is that of Ribonuclease H from Caulobacter sp. (strain K31).